We begin with the raw amino-acid sequence, 729 residues long: U-box domain-containing protein 17 (729 aa).

The U-box domain maps to 304–378 (TVPKDFVCPI…VQWCTASGIS (75 aa)). ARM repeat units lie at residues 438 to 477 (KENR…NLSI), 479 to 520 (EKNK…SLSA), 523 to 562 (EYKK…NLST), and 564 to 601 (PDNC…LLVR).

It catalyses the reaction S-ubiquitinyl-[E2 ubiquitin-conjugating enzyme]-L-cysteine + [acceptor protein]-L-lysine = [E2 ubiquitin-conjugating enzyme]-L-cysteine + N(6)-ubiquitinyl-[acceptor protein]-L-lysine.. It functions in the pathway protein modification; protein ubiquitination. In terms of biological role, functions as an E3 ubiquitin ligase. This is U-box domain-containing protein 17 (PUB17) from Arabidopsis thaliana (Mouse-ear cress).